The primary structure comprises 45 residues: Photosystem II reaction center protein K (45 aa).

Positions 1–8 (MELAMLLA) are excised as a propeptide. The helical transmembrane segment at 24 to 44 (LPVIPVFFLLLAFVWQAAVGF) threads the bilayer.

This sequence belongs to the PsbK family. As to quaternary structure, PSII is composed of 1 copy each of membrane proteins PsbA, PsbB, PsbC, PsbD, PsbE, PsbF, PsbH, PsbI, PsbJ, PsbK, PsbL, PsbM, PsbT, PsbX, PsbY, PsbZ, Psb30/Ycf12, peripheral proteins PsbO, CyanoQ (PsbQ), PsbU, PsbV and a large number of cofactors. It forms dimeric complexes.

It localises to the cellular thylakoid membrane. Its function is as follows. One of the components of the core complex of photosystem II (PSII). PSII is a light-driven water:plastoquinone oxidoreductase that uses light energy to abstract electrons from H(2)O, generating O(2) and a proton gradient subsequently used for ATP formation. It consists of a core antenna complex that captures photons, and an electron transfer chain that converts photonic excitation into a charge separation. The chain is Photosystem II reaction center protein K from Trichodesmium erythraeum (strain IMS101).